A 147-amino-acid chain; its full sequence is Hemoglobin subunit beta (147 aa).

N-acetylvaline is present on Val-2. Residues 3 to 147 (HLTGEEKGIV…VATALAHKYH (145 aa)) form the Globin domain. Thr-13 bears the Phosphothreonine mark. Position 45 is a phosphoserine (Ser-45). At Lys-60 the chain carries N6-acetyllysine. Residue His-64 coordinates heme b. Position 83 is an N6-acetyllysine (Lys-83). His-93 lines the heme b pocket. Cys-94 is modified (S-nitrosocysteine). Lys-145 is modified (N6-acetyllysine).

Belongs to the globin family. In terms of assembly, heterotetramer of two alpha chains and two beta chains. As to expression, red blood cells.

Its function is as follows. Involved in oxygen transport from the lung to the various peripheral tissues. The protein is Hemoglobin subunit beta (HBB) of Rhinolophus ferrumequinum (Greater horseshoe bat).